We begin with the raw amino-acid sequence, 227 residues long: Enolase-phosphatase E1 (227 aa).

The protein belongs to the HAD-like hydrolase superfamily. MasA/MtnC family. As to quaternary structure, monomer. The cofactor is Mg(2+).

It catalyses the reaction 5-methylsulfanyl-2,3-dioxopentyl phosphate + H2O = 1,2-dihydroxy-5-(methylsulfanyl)pent-1-en-3-one + phosphate. It participates in amino-acid biosynthesis; L-methionine biosynthesis via salvage pathway; L-methionine from S-methyl-5-thio-alpha-D-ribose 1-phosphate: step 3/6. Its pathway is amino-acid biosynthesis; L-methionine biosynthesis via salvage pathway; L-methionine from S-methyl-5-thio-alpha-D-ribose 1-phosphate: step 4/6. In terms of biological role, bifunctional enzyme that catalyzes the enolization of 2,3-diketo-5-methylthiopentyl-1-phosphate (DK-MTP-1-P) into the intermediate 2-hydroxy-3-keto-5-methylthiopentenyl-1-phosphate (HK-MTPenyl-1-P), which is then dephosphorylated to form the acireductone 1,2-dihydroxy-3-keto-5-methylthiopentene (DHK-MTPene). This Pseudomonas syringae pv. syringae (strain B728a) protein is Enolase-phosphatase E1.